Consider the following 345-residue polypeptide: Heat-inducible transcription repressor HrcA (345 aa).

It belongs to the HrcA family.

Functionally, negative regulator of class I heat shock genes (grpE-dnaK-dnaJ and groELS operons). Prevents heat-shock induction of these operons. In Listeria monocytogenes serotype 1/2a (strain 10403S), this protein is Heat-inducible transcription repressor HrcA.